We begin with the raw amino-acid sequence, 363 residues long: Putative glutamate--cysteine ligase 2 (363 aa).

This sequence belongs to the glutamate--cysteine ligase type 2 family. YbdK subfamily.

The catalysed reaction is L-cysteine + L-glutamate + ATP = gamma-L-glutamyl-L-cysteine + ADP + phosphate + H(+). In terms of biological role, ATP-dependent carboxylate-amine ligase which exhibits weak glutamate--cysteine ligase activity. The sequence is that of Putative glutamate--cysteine ligase 2 from Streptomyces coelicolor (strain ATCC BAA-471 / A3(2) / M145).